A 436-amino-acid chain; its full sequence is MDALYSHFSQVLEQQRKANTRLVVAFSGGVDSRVLLELAHRYAQEHLLPCCAVHVHHGLSHNADQWVQSCAAWCQEKNIPLTVERVQLDLTQGNSIEEEARNARYQALRAHINADDLLLTGQHADDQVETFLLALKRGSGPKGLSSMAQQMPFSQGRLIRPLLDVRRQEIERCAHAIGLHWVEDESNQDTRYDRNFLRQQILPALSERWPSFAASVQRSATLCAEQEALLDELLLPVFEQLFGEDQSLAITLLSQQSELARFKLLRMWLAKLGHPMPTRHQLSLIWQQVALSQADANPILQLSQGQVRRFNQRLYLVADNQDLSAWHAPITLNTPLALPDGLGTIELTVSRGFGQIALPEQSEALWISFNPEGLSAHPAERGHSRKLKKLFQEYQVPSWLRRRTPILMYHQQVVAVAGLFVDRQFIGQDCELFWRK.

ATP is bound at residue 27–32 (SGGVDS).

The protein belongs to the tRNA(Ile)-lysidine synthase family.

It is found in the cytoplasm. It carries out the reaction cytidine(34) in tRNA(Ile2) + L-lysine + ATP = lysidine(34) in tRNA(Ile2) + AMP + diphosphate + H(+). Functionally, ligates lysine onto the cytidine present at position 34 of the AUA codon-specific tRNA(Ile) that contains the anticodon CAU, in an ATP-dependent manner. Cytidine is converted to lysidine, thus changing the amino acid specificity of the tRNA from methionine to isoleucine. In Vibrio vulnificus (strain CMCP6), this protein is tRNA(Ile)-lysidine synthase.